A 1313-amino-acid chain; its full sequence is Kinesin-like protein KIN-12B (1313 aa).

The tract at residues 1–74 is disordered; the sequence is MKHFMMPRNA…PPRPPSSNPL (74 aa). Over residues 17-26 the composition is skewed to polar residues; it reads ESQSPNPSLT. The Kinesin motor domain maps to 96–431; sequence GVKVIVRMKP…LRFAQRAKAI (336 aa). 170–177 provides a ligand contact to ATP; that stretch reads GQTGSGKT. Microtubules-binding stretches follow at residues 298 to 302, 331 to 337, and 380 to 384; these read SSRSH, VDLAGSE, and HIPYR. Positions 429–467 are neck; the sequence is KAIQNKAIVNEVMQDDVNFLREVIRQLRDELQRVKDDKG. Residues 685-709 form a disordered region; the sequence is ESASPKIRNSRKSLRTTSMSTASQK. Residues 699 to 708 show a composition bias toward polar residues; it reads RTTSMSTASQ. 3 coiled-coil regions span residues 932–1003, 1062–1130, and 1167–1241; these read LDEE…YTDS, AEEL…RIRE, and EKEV…TEIS.

The protein belongs to the TRAFAC class myosin-kinesin ATPase superfamily. Kinesin family. KIN-12 subfamily. Homodimer and heterodimer with KIN12A. Interacts with TIO.

It is found in the cytoplasm. It localises to the cytoskeleton. Its subcellular location is the phragmoplast. Functionally, plus-end directed kinesin-like motor enzyme that plays a critical role in the organization of phragmoplast microtubules during cytokinesis. Constitutes a signaling module in association with serine/threonine-protein kinase TIO that is required to support phragmoplast expansion and cell-plate growth in plant cells. The sequence is that of Kinesin-like protein KIN-12B from Arabidopsis thaliana (Mouse-ear cress).